A 316-amino-acid chain; its full sequence is Transcription factor MafB (316 aa).

Disordered regions lie at residues 40–78 (PDRA…SPTE) and 116–204 (HQMP…EDRF). Over residues 55 to 77 (SVSSTPISTPCSSVPSSPSFSPT) the composition is skewed to low complexity. Composition is skewed to basic residues over residues 130–144 (GHHH…HQNH) and 160–172 (QHPH…HHHQ). Positions 177–198 (PSGSSSSSQQLQNSHQQHQNSS) are enriched in low complexity. Residues 231–256 (RLKQKRRTLKNRGYAQSCRFKRVQQK) form a basic motif region. In terms of domain architecture, bZIP spans 231–294 (RLKQKRRTLK…DAYKIKCEKL (64 aa)). The leucine-zipper stretch occupies residues 259–280 (LENEKTQLIQQVEQLKLEVSRL).

This sequence belongs to the bZIP family. Maf subfamily. Homodimer or heterodimer with other bHLH-Zip transcription factors. Binds DNA as a homodimer or a heterodimer.

The protein localises to the nucleus. Functionally, acts as a transcriptional activator or repressor. Implicated in the regulation of cell-type specific gene expression and play a role in inductive events during lens development. This is Transcription factor MafB (mafb) from Xenopus tropicalis (Western clawed frog).